Consider the following 557-residue polypeptide: Syntaxin-binding protein 4 (557 aa).

Phosphoserine is present on residues serine 10 and serine 12. A PDZ domain is found at 19–105; sequence AFRVITVTKE…RSESPWEIAF (87 aa). Serine 99 is subject to Phosphoserine; by PKB/AKT2. The span at 142–154 shows a compositional bias: low complexity; sequence PSETLLPKTSSTP. Positions 142–214 are disordered; the sequence is PSETLLPKTS…SGPQGKISLN (73 aa). Positions 179 to 194 are enriched in polar residues; it reads SPITSLDNSPADTSNA. Serine 216 carries the post-translational modification Phosphoserine. Positions 298–408 form a coiled coil; sequence ADEVGKLRQE…NKESVQDLRK (111 aa). The residue at position 467 (serine 467) is a Phosphoserine. In terms of domain architecture, WW spans 500 to 533; it reads DCLPYGWEEAYTADGIKYFINHVTQTTSWIHPVM.

In terms of assembly, interacts with STX4A. Post-translationally, phosphorylated on Ser-99 by PKB/AKT2 after insulin treatment. Phosphorylation on Ser-99 abolishes the interaction with STX4A. As to expression, detected in skeletal muscle, heart, testis, adipocytes and pancreatic islet cells.

Its subcellular location is the cytoplasm. In terms of biological role, plays a role in the translocation of transport vesicles from the cytoplasm to the plasma membrane. Inhibits the translocation of SLC2A4 from intracellular vesicles to the plasma membrane by STX4A binding and preventing the interaction between STX4A and VAMP2. Stimulation with insulin disrupts the interaction with STX4A, leading to increased levels of SLC2A4 at the plasma membrane. May also play a role in the regulation of insulin release by pancreatic beta cells after stimulation by glucose. This chain is Syntaxin-binding protein 4 (Stxbp4), found in Mus musculus (Mouse).